Reading from the N-terminus, the 167-residue chain is Leptin (167 aa).

Residues 1 to 21 (MRCGSLCRFLWLWSCLPYIEA) form the signal peptide. Cys-117 and Cys-167 are oxidised to a cystine.

It belongs to the leptin family.

Its subcellular location is the secreted. Functionally, key player in the regulation of energy balance and body weight control. Once released into the circulation, has central and peripheral effects by binding LEPR, found in many tissues, which results in the activation of several major signaling pathways. In the hypothalamus, acts as an appetite-regulating factor that induces a decrease in food intake and an increase in energy consumption by inducing anorexinogenic factors and suppressing orexigenic neuropeptides, also regulates bone mass and secretion of hypothalamo-pituitary-adrenal hormones. In the periphery, increases basal metabolism, influences reproductive function, regulates pancreatic beta-cell function and insulin secretion, is pro-angiogenic for endothelial cell and affects innate and adaptive immunity. In the arcuate nucleus of the hypothalamus, activates by depolarization POMC neurons inducing FOS and SOCS3 expression to release anorexigenic peptides and inhibits by hyperpolarization NPY neurons inducing SOCS3 with a consequent reduction on release of orexigenic peptides. In addition to its known satiety inducing effect, has a modulatory role in nutrient absorption. In the intestine, reduces glucose absorption by enterocytes by activating PKC and leading to a sequential activation of p38, PI3K and ERK signaling pathways which exerts an inhibitory effect on glucose absorption. Acts as a growth factor on certain tissues, through the activation of different signaling pathways increases expression of genes involved in cell cycle regulation such as CCND1, via JAK2-STAT3 pathway, or VEGFA, via MAPK1/3 and PI3K-AKT1 pathways. May also play an apoptotic role via JAK2-STAT3 pathway and up-regulation of BIRC5 expression. Pro-angiogenic, has mitogenic activity on vascular endothelial cells and plays a role in matrix remodeling by regulating the expression of matrix metalloproteinases (MMPs) and tissue inhibitors of metalloproteinases (TIMPs). In innate immunity, modulates the activity and function of neutrophils by increasing chemotaxis and the secretion of oxygen radicals. Increases phagocytosis by macrophages and enhances secretion of pro-inflammatory mediators. Increases cytotoxic ability of NK cells. Plays a pro-inflammatory role, in synergy with IL1B, by inducing NOS2 which promotes the production of IL6, IL8 and Prostaglandin E2, through a signaling pathway that involves JAK2, PI3K, MAP2K1/MEK1 and MAPK14/p38. In adaptive immunity, promotes the switch of memory T-cells towards T helper-1 cell immune responses. Increases CD4(+)CD25(-) T-cell proliferation and reduces autophagy during TCR (T-cell receptor) stimulation, through MTOR signaling pathway activation and BCL2 up-regulation. This chain is Leptin (LEP), found in Halichoerus grypus (Gray seal).